An 84-amino-acid polypeptide reads, in one-letter code: Toxin To5 (84 aa).

A signal peptide spans 1–19 (MKAIIFFIGCLMLIDLVAG). Residues 21–82 (RSGYPVTQKG…IWGSYPNNCG (62 aa)) enclose the LCN-type CS-alpha/beta domain. Disulfide bonds link C31–C81, C35–C57, C43–C62, and C47–C64. A Cysteine amide modification is found at C81.

In terms of tissue distribution, expressed by the venom gland.

The protein localises to the secreted. Its function is as follows. Beta toxins bind voltage-independently at site-4 of sodium channels (Nav) and shift the voltage of activation toward more negative potentials thereby affecting sodium channel activation and promoting spontaneous and repetitive firing. The chain is Toxin To5 from Tityus obscurus (Amazonian scorpion).